Reading from the N-terminus, the 345-residue chain is Anthranilate phosphoribosyltransferase (345 aa).

Residues glycine 86, 89–90 (GD), threonine 94, 96–99 (NIST), 114–122 (KHGNRNLSS), and alanine 126 each bind 5-phospho-alpha-D-ribose 1-diphosphate. Glycine 86 contacts anthranilate. Serine 98 contributes to the Mg(2+) binding site. Asparagine 117 serves as a coordination point for anthranilate. Arginine 172 is an anthranilate binding site. Mg(2+)-binding residues include aspartate 231 and glutamate 232.

The protein belongs to the anthranilate phosphoribosyltransferase family. In terms of assembly, homodimer. The cofactor is Mg(2+).

It carries out the reaction N-(5-phospho-beta-D-ribosyl)anthranilate + diphosphate = 5-phospho-alpha-D-ribose 1-diphosphate + anthranilate. It participates in amino-acid biosynthesis; L-tryptophan biosynthesis; L-tryptophan from chorismate: step 2/5. Its function is as follows. Catalyzes the transfer of the phosphoribosyl group of 5-phosphorylribose-1-pyrophosphate (PRPP) to anthranilate to yield N-(5'-phosphoribosyl)-anthranilate (PRA). This is Anthranilate phosphoribosyltransferase from Jannaschia sp. (strain CCS1).